The primary structure comprises 156 residues: MNRKKTRELTMKLLFQMAINKEKADVIISNLKENIEMEQGSQKNSISQIYGENMGDLKNIDIDYVVRVLRGIEKNEDMLNIEIEKYLRNWKLNRLSKVDSAILKICTYEFLHEDDIPEKVSINEAIELAKKYSSEKSASFINGVLGNMIKDEKIKK.

This sequence belongs to the NusB family.

Involved in transcription antitermination. Required for transcription of ribosomal RNA (rRNA) genes. Binds specifically to the boxA antiterminator sequence of the ribosomal RNA (rrn) operons. The protein is Transcription antitermination protein NusB of Clostridium kluyveri (strain ATCC 8527 / DSM 555 / NBRC 12016 / NCIMB 10680 / K1).